The sequence spans 92 residues: Small ribosomal subunit protein uS19c (92 aa).

It belongs to the universal ribosomal protein uS19 family.

The protein localises to the plastid. It is found in the chloroplast. Its function is as follows. Protein S19 forms a complex with S13 that binds strongly to the 16S ribosomal RNA. The protein is Small ribosomal subunit protein uS19c of Nicotiana tomentosiformis (Tobacco).